The primary structure comprises 470 residues: Probable citrate synthase, mitochondrial (470 aa).

Catalysis depends on residues His297, His351, and Asp406.

This sequence belongs to the citrate synthase family. In terms of assembly, homodimer.

It is found in the mitochondrion matrix. It carries out the reaction oxaloacetate + acetyl-CoA + H2O = citrate + CoA + H(+). It functions in the pathway carbohydrate metabolism; tricarboxylic acid cycle; isocitrate from oxaloacetate: step 1/2. The sequence is that of Probable citrate synthase, mitochondrial from Leishmania infantum.